The chain runs to 238 residues: NAD(P)H-quinone oxidoreductase subunit K 1 (238 aa).

[4Fe-4S] cluster contacts are provided by Cys-54, Cys-55, Cys-119, and Cys-150.

The protein belongs to the complex I 20 kDa subunit family. In terms of assembly, NDH-1 can be composed of about 15 different subunits; different subcomplexes with different compositions have been identified which probably have different functions. [4Fe-4S] cluster serves as cofactor.

It is found in the cellular thylakoid membrane. It carries out the reaction a plastoquinone + NADH + (n+1) H(+)(in) = a plastoquinol + NAD(+) + n H(+)(out). The enzyme catalyses a plastoquinone + NADPH + (n+1) H(+)(in) = a plastoquinol + NADP(+) + n H(+)(out). Its function is as follows. NDH-1 shuttles electrons from an unknown electron donor, via FMN and iron-sulfur (Fe-S) centers, to quinones in the respiratory and/or the photosynthetic chain. The immediate electron acceptor for the enzyme in this species is believed to be plastoquinone. Couples the redox reaction to proton translocation, and thus conserves the redox energy in a proton gradient. Cyanobacterial NDH-1 also plays a role in inorganic carbon-concentration. The sequence is that of NAD(P)H-quinone oxidoreductase subunit K 1 from Cyanothece sp. (strain PCC 7425 / ATCC 29141).